The primary structure comprises 207 residues: MSQQMHNPSIRRKLVIVGDGACGKTCLLIVFAKGKFPQVYVPTVFDNYVADVEVDGRRVELALWDTAGQEDYDRLRPLSYPDSNVVLICYSIDLPDSLENVMEKWISEVLYFCQGVPIILVGCKADLRNDPQVIEQLRQQGQQPVSQAQAQEVADQIGAVEYIECSAKTGFGVREVFEAATRASLMGKQGKSKAKSDKKKKKKCVVL.

Residue 18–25 (GDGACGKT) participates in GTP binding. Residues 40–48 (YVPTVFDNY) carry the Effector region motif. Residues 65–69 (DTAGQ) and 123–126 (CKAD) contribute to the GTP site. The tract at residues 187 to 207 (GKQGKSKAKSDKKKKKKCVVL) is disordered. The span at 190–207 (GKSKAKSDKKKKKKCVVL) shows a compositional bias: basic residues. Cysteine methyl ester is present on cysteine 204. Cysteine 204 carries S-geranylgeranyl cysteine lipidation. A propeptide spans 205 to 207 (VVL) (removed in mature form).

Belongs to the small GTPase superfamily. Rho family.

Its subcellular location is the cell membrane. Involved in the regulation of actin polarization. Rho proteins are required for distinct steps during polarized hyphal growth of A.gossypii. This is GTP-binding protein RHO1 (RHO1) from Eremothecium gossypii (strain ATCC 10895 / CBS 109.51 / FGSC 9923 / NRRL Y-1056) (Yeast).